Here is a 327-residue protein sequence, read N- to C-terminus: DNA-directed RNA polymerase subunit alpha (327 aa).

The tract at residues 1–233 is alpha N-terminal domain (alpha-NTD); that stretch reads MVREKVKVST…NLFIPFLHVE (233 aa). Residues 267–327 form an alpha C-terminal domain (alpha-CTD) region; sequence LAFQYIFIDQ…KKILDILEKK (61 aa).

Belongs to the RNA polymerase alpha chain family. In plastids the minimal PEP RNA polymerase catalytic core is composed of four subunits: alpha, beta, beta', and beta''. When a (nuclear-encoded) sigma factor is associated with the core the holoenzyme is formed, which can initiate transcription.

The protein resides in the plastid. It is found in the chloroplast. It carries out the reaction RNA(n) + a ribonucleoside 5'-triphosphate = RNA(n+1) + diphosphate. Its function is as follows. DNA-dependent RNA polymerase catalyzes the transcription of DNA into RNA using the four ribonucleoside triphosphates as substrates. This chain is DNA-directed RNA polymerase subunit alpha, found in Crucihimalaya wallichii (Rock-cress).